The following is a 443-amino-acid chain: ATP-dependent protease ATPase subunit HslU (443 aa).

ATP is bound by residues I19, G61–E66, D256, E321, and R393.

Belongs to the ClpX chaperone family. HslU subfamily. As to quaternary structure, a double ring-shaped homohexamer of HslV is capped on each side by a ring-shaped HslU homohexamer. The assembly of the HslU/HslV complex is dependent on binding of ATP.

It is found in the cytoplasm. Functionally, ATPase subunit of a proteasome-like degradation complex; this subunit has chaperone activity. The binding of ATP and its subsequent hydrolysis by HslU are essential for unfolding of protein substrates subsequently hydrolyzed by HslV. HslU recognizes the N-terminal part of its protein substrates and unfolds these before they are guided to HslV for hydrolysis. The polypeptide is ATP-dependent protease ATPase subunit HslU (Ralstonia nicotianae (strain ATCC BAA-1114 / GMI1000) (Ralstonia solanacearum)).